Here is a 281-residue protein sequence, read N- to C-terminus: MAFQMVTQYAHSPEDIDHYNTDELRQQFLMAEIFVPGDIRLTYTYNDRMIFGGVTPTTTPLEIKLDQQLGVDYFLQRRELGFINIGGAGTVTIDGTTSDVAPHDGYYISMGTQSVIFASTDAKHPAKFYVVSTPAHRAYPSKQLAFKDTLAMPMGDQAHMNKRTIYKYIDASTMATCQLQMGYTVLAPGNSWNTMPAHTHARRMETYLYTEFGDPNTRVAHFLGTPENTKHIWLEPDQAVVNPSYSIHCGVGTTNYAFIWAMCGENQTYDDMDAVDMHDLR.

Residues His-198, His-200, Glu-205, and His-248 each coordinate Zn(2+).

This sequence belongs to the KduI family. The cofactor is Zn(2+).

The enzyme catalyses 5-dehydro-4-deoxy-D-glucuronate = 3-deoxy-D-glycero-2,5-hexodiulosonate. It functions in the pathway glycan metabolism; pectin degradation; 2-dehydro-3-deoxy-D-gluconate from pectin: step 4/5. Its function is as follows. Catalyzes the isomerization of 5-dehydro-4-deoxy-D-glucuronate to 3-deoxy-D-glycero-2,5-hexodiulosonate. The chain is 4-deoxy-L-threo-5-hexosulose-uronate ketol-isomerase from Levilactobacillus brevis (strain ATCC 367 / BCRC 12310 / CIP 105137 / JCM 1170 / LMG 11437 / NCIMB 947 / NCTC 947) (Lactobacillus brevis).